Reading from the N-terminus, the 43-residue chain is Protein PsbN (43 aa).

A helical transmembrane segment spans residues 7–24 (VAISISRSLVSFTGYALY).

Belongs to the PsbN family.

Its subcellular location is the plastid. It localises to the chloroplast thylakoid membrane. Functionally, may play a role in photosystem I and II biogenesis. This Ginkgo biloba (Ginkgo) protein is Protein PsbN.